The sequence spans 697 residues: Phenylalanine--tRNA ligase beta subunit, chloroplastic (697 aa).

Residues 283–368 form the B5 domain; sequence NISRILFIDK…RIYGFDNFIS (86 aa). Mg(2+) contacts are provided by Asp346, Asp352, Glu355, and Glu356. One can recognise an FDX-ACB domain in the interval 609 to 697; it reads SSYPSLTRDI…IDDLLNEYKL (89 aa).

It belongs to the phenylalanyl-tRNA synthetase beta subunit family. Type 1 subfamily. In terms of assembly, tetramer of two alpha and two beta subunits. The cofactor is Mg(2+).

It is found in the plastid. It localises to the chloroplast. The catalysed reaction is tRNA(Phe) + L-phenylalanine + ATP = L-phenylalanyl-tRNA(Phe) + AMP + diphosphate + H(+). In Gracilaria tenuistipitata var. liui (Red alga), this protein is Phenylalanine--tRNA ligase beta subunit, chloroplastic.